The sequence spans 385 residues: Cytochrome b (385 aa).

4 helical membrane passes run F32–M52, W76–G98, T113–V133, and F179–I199. The heme b site is built by H82 and H96. Residues H183 and H197 each coordinate heme b. H202 is a binding site for a ubiquinone. The next 4 membrane-spanning stretches (helical) occupy residues F226–F246, L290–D310, L322–A342, and F349–P369.

This sequence belongs to the cytochrome b family. In terms of assembly, fungal cytochrome b-c1 complex contains 10 subunits; 3 respiratory subunits, 2 core proteins and 5 low-molecular weight proteins. Cytochrome b-c1 complex is a homodimer. Requires heme b as cofactor.

It is found in the mitochondrion inner membrane. Functionally, component of the ubiquinol-cytochrome c reductase complex (complex III or cytochrome b-c1 complex) that is part of the mitochondrial respiratory chain. The b-c1 complex mediates electron transfer from ubiquinol to cytochrome c. Contributes to the generation of a proton gradient across the mitochondrial membrane that is then used for ATP synthesis. The sequence is that of Cytochrome b (cob) from Aspergillus tubingensis.